A 254-amino-acid chain; its full sequence is Long form salivary protein D7LC (254 aa).

Residues 1–19 (MNAVITSLLFLSLVGLGYS) form the signal peptide. 2 disulfides stabilise this stretch: Cys-36-Cys-66 and Cys-62-Cys-112. Thromboxane A2 is bound at residue Trp-49. Trp-52 contributes to the leukotriene C4 binding site. Tyr-63 contributes to the thromboxane A2 binding site. Residues Gly-136 and Lys-154 each contribute to the leukotriene C4 site. Residue Lys-154 participates in thromboxane A2 binding. Disulfide bonds link Cys-162–Cys-178, Cys-174–Cys-221, and Cys-211–Cys-230.

This sequence belongs to the PBP/GOBP family.

The protein localises to the secreted. Functionally, modulates blood feeding of female sandflies on vertebrate species by binding and sequestering different mediators involved in the host response. Binds leukotriene C4, leukotriene D4, leukotriene E4 and U-46619, a stable analog of thromboxane A2. Does not bind histamine or serotonin. Inhibits platelet aggregation induced by low concentrations of collagen in thromboxane A2-dependent manner. This chain is Long form salivary protein D7LC, found in Phlebotomus papatasi (Sandfly).